Consider the following 154-residue polypeptide: Superoxide dismutase [Cu-Zn] (154 aa).

Cu cation contacts are provided by His-47, His-49, and His-64. An intrachain disulfide couples Cys-58 to Cys-147. Residues His-64, His-72, His-81, and Asp-84 each coordinate Zn(2+). His-121 is a Cu cation binding site. Positions 125–136 (DDLGKGGNEESL) are enriched in basic and acidic residues. The disordered stretch occupies residues 125-144 (DDLGKGGNEESLKTGNAGPR). Arg-144 serves as a coordination point for substrate.

This sequence belongs to the Cu-Zn superoxide dismutase family. In terms of assembly, homodimer. Requires Cu cation as cofactor. Zn(2+) serves as cofactor.

It is found in the cytoplasm. It carries out the reaction 2 superoxide + 2 H(+) = H2O2 + O2. Destroys radicals which are normally produced within the cells and which are toxic to biological systems. This Neurospora crassa (strain ATCC 24698 / 74-OR23-1A / CBS 708.71 / DSM 1257 / FGSC 987) protein is Superoxide dismutase [Cu-Zn] (sod-1).